The following is a 143-amino-acid chain: FIS1-related protein fis-1 (143 aa).

A helical transmembrane segment spans residues 121-141 (LGLLGGAVAVVGGLVIAGLAF).

The protein belongs to the FIS1 family.

It is found in the mitochondrion outer membrane. Its subcellular location is the peroxisome membrane. Functionally, involved in the fragmentation of the mitochondrial network. Involved in perinuclear clustering of the mitochondrial network. Plays a role in removal of ultraviolet C radiation-induced mitochondrial DNA damage. May act, redundantly with fis-2, downstream of mitochondrial fission, before the fission products participate in either mitochondrial homeostasis, mitophagy, or apoptosis. The chain is FIS1-related protein fis-1 from Caenorhabditis elegans.